The chain runs to 141 residues: Hemoglobin subunit alpha-1/2 (141 aa).

Positions 1-141 (VLSPADKTNV…VSTVLTSKYR (141 aa)) constitute a Globin domain. Phosphoserine is present on serine 3. Residue lysine 7 is modified to N6-succinyllysine. Phosphothreonine is present on threonine 8. Residue lysine 11 is modified to N6-succinyllysine. Lysine 16 carries the post-translational modification N6-acetyllysine; alternate. Lysine 16 bears the N6-succinyllysine; alternate mark. A Phosphotyrosine modification is found at tyrosine 24. An N6-succinyllysine modification is found at lysine 40. Serine 49 carries the post-translational modification Phosphoserine. Histidine 58 contributes to the O2 binding site. Histidine 87 contacts heme b. Serine 102 carries the phosphoserine modification. Position 108 is a phosphothreonine (threonine 108). A Phosphoserine modification is found at serine 124. Threonine 134 and threonine 137 each carry phosphothreonine. Serine 138 is modified (phosphoserine).

This sequence belongs to the globin family. Heterotetramer of two alpha chains and two beta chains. Red blood cells.

Its function is as follows. Involved in oxygen transport from the lung to the various peripheral tissues. The protein is Hemoglobin subunit alpha-1/2 of Leptonychotes weddellii (Weddell seal).